Consider the following 346-residue polypeptide: Tryptophan--tRNA ligase (346 aa).

ATP contacts are provided by residues 10–12 (QAS) and 18–19 (GN). A 'HIGH' region motif is present at residues 11–19 (ASGKQHLGN). Position 140 (D140) interacts with L-tryptophan. Residues 152–154 (GND), I191, and 200–204 (KMSKS) each bind ATP. The 'KMSKS' region signature appears at 200-204 (KMSKS).

This sequence belongs to the class-I aminoacyl-tRNA synthetase family. Homodimer.

It localises to the cytoplasm. It catalyses the reaction tRNA(Trp) + L-tryptophan + ATP = L-tryptophyl-tRNA(Trp) + AMP + diphosphate + H(+). Catalyzes the attachment of tryptophan to tRNA(Trp). The chain is Tryptophan--tRNA ligase from Mycoplasma pneumoniae (strain ATCC 29342 / M129 / Subtype 1) (Mycoplasmoides pneumoniae).